Consider the following 809-residue polypeptide: Sucrose synthase 4 (809 aa).

A GT-B glycosyltransferase region spans residues 275-753; that stretch reads MIFNVVVVSP…GLQRIYEKYT (479 aa).

The protein belongs to the glycosyltransferase 1 family. Plant sucrose synthase subfamily. Predominantly expressed in the leaf tissues and in caryopses.

It catalyses the reaction an NDP-alpha-D-glucose + D-fructose = a ribonucleoside 5'-diphosphate + sucrose + H(+). Functionally, sucrose-cleaving enzyme that provides UDP-glucose and fructose for various metabolic pathways. The protein is Sucrose synthase 4 (SUS4) of Oryza sativa subsp. japonica (Rice).